The sequence spans 131 residues: Small ribosomal subunit protein uS8 (131 aa).

It belongs to the universal ribosomal protein uS8 family. In terms of assembly, part of the 30S ribosomal subunit. Contacts proteins S5 and S12.

Its function is as follows. One of the primary rRNA binding proteins, it binds directly to 16S rRNA central domain where it helps coordinate assembly of the platform of the 30S subunit. The protein is Small ribosomal subunit protein uS8 of Thermodesulfovibrio yellowstonii (strain ATCC 51303 / DSM 11347 / YP87).